The chain runs to 458 residues: Cysteine protease ATG4C (458 aa).

Met-1 carries the N-acetylmethionine modification. Cys-111 functions as the Nucleophile in the catalytic mechanism. Catalysis depends on residues Asp-345 and His-347. Ser-451 is modified (phosphoserine). Thr-452 is subject to Phosphothreonine.

This sequence belongs to the peptidase C54 family.

The protein localises to the cytoplasm. The catalysed reaction is [protein]-C-terminal L-amino acid-glycyl-phosphatidylethanolamide + H2O = [protein]-C-terminal L-amino acid-glycine + a 1,2-diacyl-sn-glycero-3-phosphoethanolamine. Its activity is regulated as follows. Inhibited by N-ethylmaleimide. Functionally, cysteine protease that plays a key role in autophagy by mediating both proteolytic activation and delipidation of ATG8 family proteins. The protease activity is required for proteolytic activation of ATG8 family proteins: cleaves the C-terminal amino acid of ATG8 proteins MAP1LC3 and GABARAPL2, to reveal a C-terminal glycine. Exposure of the glycine at the C-terminus is essential for ATG8 proteins conjugation to phosphatidylethanolamine (PE) and insertion to membranes, which is necessary for autophagy. In addition to the protease activity, also mediates delipidation of ATG8 family proteins. Catalyzes delipidation of PE-conjugated forms of ATG8 proteins during macroautophagy. Compared to ATG4B, the major protein for proteolytic activation of ATG8 proteins, shows weaker ability to cleave the C-terminal amino acid of ATG8 proteins, while it displays stronger delipidation activity. In contrast to other members of the family, weakly or not involved in phagophore growth during mitophagy. The sequence is that of Cysteine protease ATG4C from Mus musculus (Mouse).